We begin with the raw amino-acid sequence, 366 residues long: Mitogen-activated protein kinase sakA (366 aa).

Residues 20–299 enclose the Protein kinase domain; it reads YTDLQPVGMG…AGEALAHEYL (280 aa). ATP-binding positions include 26–34 and Lys-49; that span reads VGMGAFGLV. The active-site Proton acceptor is Asp-141. At Thr-171 the chain carries Phosphothreonine. A TXY motif is present at residues 171–173; the sequence is TGY. Tyr-173 bears the Phosphotyrosine mark.

This sequence belongs to the protein kinase superfamily. Ser/Thr protein kinase family. MAP kinase subfamily. HOG1 sub-subfamily. In terms of assembly, interacts with the AGC kinase ypkA. Interacts with sakA upon osmotic and cell wall stresses. Mg(2+) is required as a cofactor. Dually phosphorylated on Thr-171 and Tyr-173, which activates the enzyme. Environmental stresses such as high temperature, osmotic stress, cold stress or ethanol stress modulate the activation of sakA via phosphorylation.

The protein localises to the cytoplasm. It is found in the nucleus. It carries out the reaction L-seryl-[protein] + ATP = O-phospho-L-seryl-[protein] + ADP + H(+). The enzyme catalyses L-threonyl-[protein] + ATP = O-phospho-L-threonyl-[protein] + ADP + H(+). With respect to regulation, activated by tyrosine and threonine phosphorylation. Deactivated by protein phosphatase 2C homolog 2 ptcB. Its function is as follows. Proline-directed serine/threonine-protein kinase involved in a signal transduction pathway that is activated by changes in the osmolarity of the extracellular environment. Controls osmotic regulation of transcription of target genes. Involved in environmental stress response. With mpkC, plays a redundant or cooperative role in the conidial stress resistance. Also plays a supportive role in osmotic stress adaptation when sakA is deficient. Involved in paradoxical growth, the cell wall integrity (CWI) pathway and biofilm formation. Also collaborates with mpkC to allow ful virulence in a neutropenic murine model ofinvasive pulmonary aspergillosis. MpkC and sakA have both independent and collaborative functions during the transcriptional response to transient osmotic stress and sakA not only seems to modulate pathways involved in nucleotide, fatty acid, nitrogen and organic acid biosynthesis but is also important for the activation of genes involved in mitochondrial and endoplasmic reticulum functions. The sequence is that of Mitogen-activated protein kinase sakA from Aspergillus fumigatus (strain ATCC MYA-4609 / CBS 101355 / FGSC A1100 / Af293) (Neosartorya fumigata).